A 436-amino-acid polypeptide reads, in one-letter code: tRNA(Ile)-lysidine synthase (436 aa).

27 to 32 (SGGVDS) lines the ATP pocket.

It belongs to the tRNA(Ile)-lysidine synthase family.

The protein resides in the cytoplasm. It catalyses the reaction cytidine(34) in tRNA(Ile2) + L-lysine + ATP = lysidine(34) in tRNA(Ile2) + AMP + diphosphate + H(+). Functionally, ligates lysine onto the cytidine present at position 34 of the AUA codon-specific tRNA(Ile) that contains the anticodon CAU, in an ATP-dependent manner. Cytidine is converted to lysidine, thus changing the amino acid specificity of the tRNA from methionine to isoleucine. This is tRNA(Ile)-lysidine synthase from Vibrio vulnificus (strain CMCP6).